The primary structure comprises 299 residues: F-actin-capping protein subunit alpha-3 (299 aa).

Phosphoserine is present on residues Ser2 and Ser290.

Belongs to the F-actin-capping protein alpha subunit family. In terms of assembly, component of the F-actin capping complex, composed of a heterodimer of an alpha and a beta subunit. Component of the WASH complex, composed of F-actin-capping protein subunit alpha (CAPZA1, CAPZA2 or CAPZA3), F-actin-capping protein subunit beta (CAPZB), WASHC1, WASHC2, WASHC3, WASHC4 and WASHC5. As to expression, exclusively expressed in the testis.

The protein localises to the cytoplasm. It is found in the cytoskeleton. F-actin-capping proteins bind in a Ca(2+)-independent manner to the fast growing ends of actin filaments (barbed end) thereby blocking the exchange of subunits at these ends. Unlike other capping proteins (such as gelsolin and severin), these proteins do not sever actin filaments. May play a role in the morphogenesis of spermatid. The protein is F-actin-capping protein subunit alpha-3 (Capza3) of Mus musculus (Mouse).